The following is a 415-amino-acid chain: MESWSAPEVPALPGRGPQLRLYDSADRQVRPVSAGDTATMYVCGITPYDATHLGHAATYLAFDLVHRLWLDAGHRVHYVQNITDVDDPLFERAARDGIDWRDLGAREIQLFREDMAALRVLPPHDYVAATDAIAEVIELVEKMLASGAAYVVDDPEFPDVYYRADATVQFGYESNYDHETMLTLFAERGGDPDRAGKADELDALLWRAERPGEPSWPSPFGPGRPGWHVECAAIALSRIGTGLDIQGGGSDLIFPHHEFSAAHAESVTGERRFARHYVHAGMIGWDGHKMSKSRGNLVLVSRLRAEGVDPSAIRLGLLAGHYREDRFWSDDVLSDAQTRLQRWRRATSLPTGPDATDVLARVRTYLADDLDTPKALIALDAWCTEALDGGGSDVTAPKTVATAVDALLGVALPVE.

Cys43 serves as a coordination point for Zn(2+). L-cysteinyl-5'-AMP is bound by residues Cys43–Thr46, Thr58, and Asn81–Thr83. Residues Ile45–His55 carry the 'HIGH' region motif. The short motif at Glu187–Pro192 is the 'ERGGDP' region element. Trp227 contacts L-cysteinyl-5'-AMP. Residue Cys231 participates in Zn(2+) binding. Gly249–Asp251 contacts L-cysteinyl-5'-AMP. His256 serves as a coordination point for Zn(2+). Ile283 serves as a coordination point for L-cysteinyl-5'-AMP. The 'KMSKS' region signature appears at Lys289 to Ser293.

This sequence belongs to the class-I aminoacyl-tRNA synthetase family. MshC subfamily. As to quaternary structure, monomer. It depends on Zn(2+) as a cofactor.

It catalyses the reaction 1D-myo-inositol 2-amino-2-deoxy-alpha-D-glucopyranoside + L-cysteine + ATP = 1D-myo-inositol 2-(L-cysteinylamino)-2-deoxy-alpha-D-glucopyranoside + AMP + diphosphate + H(+). Catalyzes the ATP-dependent condensation of GlcN-Ins and L-cysteine to form L-Cys-GlcN-Ins. The chain is L-cysteine:1D-myo-inositol 2-amino-2-deoxy-alpha-D-glucopyranoside ligase from Mycobacterium sp. (strain JLS).